Reading from the N-terminus, the 245-residue chain is Extracellular protein ARB_04177 (245 aa).

It localises to the secreted. The polypeptide is Extracellular protein ARB_04177 (Arthroderma benhamiae (strain ATCC MYA-4681 / CBS 112371) (Trichophyton mentagrophytes)).